The sequence spans 450 residues: Tubulin alpha-3 chain (450 aa).

Residues glutamine 11, glutamate 71, glycine 144, threonine 145, threonine 179, asparagine 206, and asparagine 228 each coordinate GTP. Glutamate 71 is a binding site for Mg(2+). Glutamate 254 is an active-site residue.

Belongs to the tubulin family. In terms of assembly, dimer of alpha and beta chains. A typical microtubule is a hollow water-filled tube with an outer diameter of 25 nm and an inner diameter of 15 nM. Alpha-beta heterodimers associate head-to-tail to form protofilaments running lengthwise along the microtubule wall with the beta-tubulin subunit facing the microtubule plus end conferring a structural polarity. Microtubules usually have 13 protofilaments but different protofilament numbers can be found in some organisms and specialized cells. The cofactor is Mg(2+). In terms of processing, undergoes a tyrosination/detyrosination cycle, the cyclic removal and re-addition of a C-terminal tyrosine residue by the enzymes tubulin tyrosine carboxypeptidase (TTCP) and tubulin tyrosine ligase (TTL), respectively.

It is found in the cytoplasm. The protein localises to the cytoskeleton. It catalyses the reaction GTP + H2O = GDP + phosphate + H(+). In terms of biological role, tubulin is the major constituent of microtubules, a cylinder consisting of laterally associated linear protofilaments composed of alpha- and beta-tubulin heterodimers. Microtubules grow by the addition of GTP-tubulin dimers to the microtubule end, where a stabilizing cap forms. Below the cap, tubulin dimers are in GDP-bound state, owing to GTPase activity of alpha-tubulin. The protein is Tubulin alpha-3 chain (TUBA3) of Eleusine indica (Goosegrass).